The sequence spans 565 residues: Sulfite reductase [NADPH] hemoprotein beta-component (565 aa).

The [4Fe-4S] cluster site is built by Cys429, Cys435, Cys474, and Cys478. Residue Cys478 coordinates siroheme.

This sequence belongs to the nitrite and sulfite reductase 4Fe-4S domain family. As to quaternary structure, alpha(8)-beta(8). The alpha component is a flavoprotein, the beta component is a hemoprotein. The cofactor is siroheme. [4Fe-4S] cluster is required as a cofactor.

The enzyme catalyses hydrogen sulfide + 3 NADP(+) + 3 H2O = sulfite + 3 NADPH + 4 H(+). The protein operates within sulfur metabolism; hydrogen sulfide biosynthesis; hydrogen sulfide from sulfite (NADPH route): step 1/1. Component of the sulfite reductase complex that catalyzes the 6-electron reduction of sulfite to sulfide. This is one of several activities required for the biosynthesis of L-cysteine from sulfate. The chain is Sulfite reductase [NADPH] hemoprotein beta-component from Shewanella baltica (strain OS223).